A 298-amino-acid polypeptide reads, in one-letter code: Phospholipase A1 (298 aa).

C4 and C87 are disulfide-bonded. N-linked (GlcNAc...) asparagine glycosylation is found at N88 and N122. S134 (nucleophile) is an active-site residue. Residue D162 is the Charge relay system of the active site. Intrachain disulfides connect C173–C178 and C216–C225. H227 (charge relay system) is an active-site residue. Disulfide bonds link C242–C266, C243–C291, and C259–C264.

It belongs to the AB hydrolase superfamily. Lipase family. In terms of tissue distribution, expressed by the venom gland.

It localises to the secreted. The catalysed reaction is a 1,2-diacyl-sn-glycero-3-phosphocholine + H2O = a 2-acyl-sn-glycero-3-phosphocholine + a fatty acid + H(+). Functionally, catalyzes the hydrolysis of phosphatidylcholine with phospholipase A1 activity. May act as an allergen and induce hemolytic activity. The sequence is that of Phospholipase A1 from Vespula squamosa (Southern yellow jacket).